A 501-amino-acid polypeptide reads, in one-letter code: NAD(P)H-quinone oxidoreductase chain 4, chloroplastic (501 aa).

14 helical membrane passes run 4–24, 35–55, 87–107, 113–133, 134–154, 167–187, 211–231, 242–262, 274–294, 310–330, 331–351, 386–406, 416–436, and 464–484; these read FPWLTTIVLLPVFAGCVIPFF, YTLGVCLLEFLLITYVFCYYF, IGLILLTGFITTLATLAAWPV, LFYFLMLAMYSGQVGLFASQD, ILLFFFMWELELIPVYLLLCI, FILYTAGGSIFILMGALTMGF, IILYLGFFIAYAVKLPIFPLH, HYSTCMLLAGILLKMGGYGLI, SIFAPWIVAVGAIQIVYAALI, ISHMGFVLIGIGSMTDVGLNG, AILQMVSHGLIGAALFFLAGI, LALPGMSGFVAEFLVFLGIVV, ILVTIIEAIGIILTPIYLLSM, and IFILVCLIFPIVGIGLYPNSV.

The protein belongs to the complex I subunit 4 family.

Its subcellular location is the plastid. It is found in the chloroplast thylakoid membrane. The enzyme catalyses a plastoquinone + NADH + (n+1) H(+)(in) = a plastoquinol + NAD(+) + n H(+)(out). It catalyses the reaction a plastoquinone + NADPH + (n+1) H(+)(in) = a plastoquinol + NADP(+) + n H(+)(out). The protein is NAD(P)H-quinone oxidoreductase chain 4, chloroplastic of Physcomitrium patens (Spreading-leaved earth moss).